Reading from the N-terminus, the 275-residue chain is Diaminopimelate epimerase (275 aa).

N20 and N63 together coordinate substrate. The active-site Proton donor is the C72. Substrate is bound by residues 73-74, N179, and 197-198; these read GN and ER. C207 serves as the catalytic Proton acceptor. 208–209 contributes to the substrate binding site; it reads GT.

It belongs to the diaminopimelate epimerase family. In terms of assembly, homodimer.

It is found in the cytoplasm. The enzyme catalyses (2S,6S)-2,6-diaminopimelate = meso-2,6-diaminopimelate. Its pathway is amino-acid biosynthesis; L-lysine biosynthesis via DAP pathway; DL-2,6-diaminopimelate from LL-2,6-diaminopimelate: step 1/1. In terms of biological role, catalyzes the stereoinversion of LL-2,6-diaminopimelate (L,L-DAP) to meso-diaminopimelate (meso-DAP), a precursor of L-lysine and an essential component of the bacterial peptidoglycan. This is Diaminopimelate epimerase from Chlamydia trachomatis serovar L2 (strain ATCC VR-902B / DSM 19102 / 434/Bu).